Reading from the N-terminus, the 110-residue chain is UPF0122 protein BCAH187_A3894 (110 aa).

Belongs to the UPF0122 family.

Functionally, might take part in the signal recognition particle (SRP) pathway. This is inferred from the conservation of its genetic proximity to ftsY/ffh. May be a regulatory protein. This Bacillus cereus (strain AH187) protein is UPF0122 protein BCAH187_A3894.